Here is a 213-residue protein sequence, read N- to C-terminus: NDR1/HIN1-like protein 26 (213 aa).

At 1 to 27 the chain is on the cytoplasmic side; the sequence is MSQISITSPKHCAKKGGININNRHKKL. A helical membrane pass occupies residues 28-48; it reads FFTFSTFFSGLLLIIFLVWLI. Residues 49–213 are Lumenal-facing; sequence LHPERPEFSL…LQGTRCSTTI (165 aa). N-linked (GlcNAc...) asparagine glycans are attached at residues Asn-67, Asn-77, and Asn-195.

Expressed in the vasculature of roots, rosette leaves, stems, cauline leaves and flowers. Specifically expressed in phloem.

The protein localises to the cell junction. Its subcellular location is the plasmodesma. It is found in the endoplasmic reticulum membrane. Functionally, involved in the regulation of sugar, amino acid and some primary metabolite export from companion cells (CCs) to sieve elements (SEs) in phloem. Required for apoplastic phloem sugar loading in source leaves in order to transport it to sink tissues. Required for correct sugar partitioning between source leaves and sink organs. The chain is NDR1/HIN1-like protein 26 from Arabidopsis thaliana (Mouse-ear cress).